Reading from the N-terminus, the 333-residue chain is Ribosomal RNA large subunit methyltransferase F (333 aa).

Positions 1 to 10 are enriched in basic residues; sequence MPQPPKRPRK. A disordered region spans residues 1–31; the sequence is MPQPPKRPRKPAPAAVKTAPAKGELHPRNRH. Over residues 12–22 the composition is skewed to low complexity; that stretch reads APAAVKTAPAK.

The protein belongs to the methyltransferase superfamily. METTL16/RlmF family.

The protein localises to the cytoplasm. The catalysed reaction is adenosine(1618) in 23S rRNA + S-adenosyl-L-methionine = N(6)-methyladenosine(1618) in 23S rRNA + S-adenosyl-L-homocysteine + H(+). In terms of biological role, specifically methylates the adenine in position 1618 of 23S rRNA. This chain is Ribosomal RNA large subunit methyltransferase F, found in Ectopseudomonas mendocina (strain ymp) (Pseudomonas mendocina).